A 213-amino-acid polypeptide reads, in one-letter code: Major fimbrial subunit (213 aa).

A signal peptide spans 1–20 (MKKTLLGSLILLAFAGNVQA). A disulfide bridge connects residues Cys-41 and Cys-81.

This sequence belongs to the fimbrial protein family.

It is found in the fimbrium. In terms of biological role, mediates adherence to oropharyngeal epithelial cells. Helps the airway colonization process. In Haemophilus influenzae, this protein is Major fimbrial subunit (hifA).